A 907-amino-acid chain; its full sequence is Leucine-rich repeat-containing G-protein coupled receptor 5 (907 aa).

Positions 1 to 21 (MDTSCVHMLLSLLALLQLVAA) are cleaved as a signal peptide. The Extracellular segment spans residues 22–561 (GSSPGPDAIP…EHLFGSWLIR (540 aa)). In terms of domain architecture, LRRNT spans 25–66 (PGPDAIPRGCPSHCHCELDGRMLLRVDCSDLGLSELPSNLSV). Cystine bridges form between C34–C40 and C38–C52. N63 and N77 each carry an N-linked (GlcNAc...) asparagine glycan. LRR repeat units follow at residues 67–88 (FTSY…LLHR), 91–112 (FLEE…AFTG), 115–136 (SLKV…ALQN), 139–160 (SLQS…CFSG), 163–184 (SLRH…AFRS), 187–208 (ALQA…AFGN), 211–232 (SLVV…CFDG), 235–256 (SLET…IKTL), 258–279 (NLKE…AFVG), 282–303 (SLIT…AFQH), 306–325 (ELRT…PHLT), 329–350 (TLES…VCDQ), 353–374 (NLQV…SGCQ), 375–396 (KLQK…TFQQ), 399–420 (NLRS…AFST), and 423–446 (SLIK…HGLT). N208 carries an N-linked (GlcNAc...) asparagine glycan. An intrachain disulfide couples C348 to C373. C479 and C541 are joined by a disulfide. A helical membrane pass occupies residues 562–582 (IGVWTTAVLALSCNALVALTV). The Cytoplasmic segment spans residues 583 to 593 (FRTPLYISSIK). The chain crosses the membrane as a helical span at residues 594-614 (LLIGVIAVVDILMGVSSAVLA). Residues 615–638 (AVDAFTFGRFAQHGAWWEDGIGCQ) lie on the Extracellular side of the membrane. C637 and C712 form a disulfide bridge. The helical transmembrane segment at 639–659 (IVGFLSIFASESSIFLLTLAA) threads the bilayer. The Cytoplasmic segment spans residues 660–682 (LERGFSVKCSSKFEVKAPLFSLR). The helical transmembrane segment at 683–703 (AIVLLCVLLALTIATIPLLGG) threads the bilayer. The Extracellular segment spans residues 704-723 (SKYNASPLCLPLPFGEPSTT). Residues 724 to 744 (GYMVALVLLNSLCFLIMTIAY) traverse the membrane as a helical segment. Topologically, residues 745–767 (TKLYCSLEKGELENLWDCSMVKH) are cytoplasmic. A helical membrane pass occupies residues 768 to 788 (IALLLFANCILYCPVAFLSFS). Residues 789–802 (SLLNLTFISPDVIK) lie on the Extracellular side of the membrane. Residue N792 is glycosylated (N-linked (GlcNAc...) asparagine). The helical transmembrane segment at 803–823 (FILLVIVPLPSCLNPLLYIVF) threads the bilayer. The Cytoplasmic portion of the chain corresponds to 824–907 (NPHFKEDMGS…LSSVAFVPCL (84 aa)).

It belongs to the G-protein coupled receptor 1 family. In terms of assembly, identified in a complex composed of RNF43, LGR5 and RSPO1. Also interacts with other R-spondin ligands, including RSPO2, RSPO3 and RSPO4. Expressed in the intestinal epithelium (at protein level). Expressed in the gonads, the adrenal gland, and in the brain. In the central nervous system expression is restricted to the olfactory bulb. In the adrenal gland detected only in the neural-crest derived chromaffin cells of the medulla, but not in the cells of the adrenal cortex. In the gonads, the expression is high in Graafian follicle, but absent from primary and secondary follicles. In the intestine, exclusively expressed in cycling crypt base columnar cells. Expressed in the lower bulge and secondary germ area of telogen hair follicles and in the lower outer root sheath of anagen hair follicle.

It localises to the cell membrane. The protein localises to the golgi apparatus. It is found in the trans-Golgi network membrane. In terms of biological role, receptor for R-spondins that potentiates the canonical Wnt signaling pathway and acts as a stem cell marker of the intestinal epithelium and the hair follicle. Upon binding to R-spondins (RSPO1, RSPO2, RSPO3 or RSPO4), associates with phosphorylated LRP6 and frizzled receptors that are activated by extracellular Wnt receptors, triggering the canonical Wnt signaling pathway to increase expression of target genes. In contrast to classical G-protein coupled receptors, does not activate heterotrimeric G-proteins to transduce the signal. Involved in the development and/or maintenance of the adult intestinal stem cells during postembryonic development. The protein is Leucine-rich repeat-containing G-protein coupled receptor 5 (Lgr5) of Mus musculus (Mouse).